The primary structure comprises 653 residues: Chromosomal replication initiator protein DnaA (653 aa).

The tract at residues 1–100 (MADVPADLAA…SAGEPPASAS (100 aa)) is domain I, interacts with DnaA modulators. Residues 86–310 (ITVDDSAGEP…PAPATGPGEP (225 aa)) are disordered. The domain II stretch occupies residues 101 to 312 (PAPPRYEEPE…PATGPGEPTA (212 aa)). Basic and acidic residues-rich tracts occupy residues 120–150 (DPYESRGREGYEGYGRHRADDHRQGHNDRHQ) and 221–267 (PSYD…RRNI). Over residues 284–310 (GSALPASSGAPGPLAAQPAPATGPGEP) the composition is skewed to low complexity. The interval 313-529 (RLNPKYLFDT…GALIRVTAFA (217 aa)) is domain III, AAA+ region. Gly357, Gly359, Lys360, and Thr361 together coordinate ATP. Positions 530-653 (SLNRQPVDLG…TELTNRIKNG (124 aa)) are domain IV, binds dsDNA.

Belongs to the DnaA family. As to quaternary structure, oligomerizes as a right-handed, spiral filament on DNA at oriC.

The protein resides in the cytoplasm. Plays an essential role in the initiation and regulation of chromosomal replication. ATP-DnaA binds to the origin of replication (oriC) to initiate formation of the DNA replication initiation complex once per cell cycle. Binds the DnaA box (a 9 base pair repeat at the origin) and separates the double-stranded (ds)DNA. Forms a right-handed helical filament on oriC DNA; dsDNA binds to the exterior of the filament while single-stranded (ss)DNA is stabiized in the filament's interior. The ATP-DnaA-oriC complex binds and stabilizes one strand of the AT-rich DNA unwinding element (DUE), permitting loading of DNA polymerase. After initiation quickly degrades to an ADP-DnaA complex that is not apt for DNA replication. Binds acidic phospholipids. The sequence is that of Chromosomal replication initiator protein DnaA from Streptomyces avermitilis (strain ATCC 31267 / DSM 46492 / JCM 5070 / NBRC 14893 / NCIMB 12804 / NRRL 8165 / MA-4680).